A 185-amino-acid chain; its full sequence is MISSNDFRTGTTIEIDGAVWRVVEFLHVKPGKGSAFVRTKLKNAKTGNVVEKTFRAGETVPQAVLEKSTLQYTYKDGDDFVFMDMETYEEGRLTAATIGDRVKYLKEGMEANVITWNGQVIEVELPNSVVLEVIETDPGVKGDTATGGTKPAKVETGAQVMVPLFISVGERIKIDTRNDSYLGRE.

Belongs to the elongation factor P family.

The protein resides in the cytoplasm. The protein operates within protein biosynthesis; polypeptide chain elongation. Functionally, involved in peptide bond synthesis. Stimulates efficient translation and peptide-bond synthesis on native or reconstituted 70S ribosomes in vitro. Probably functions indirectly by altering the affinity of the ribosome for aminoacyl-tRNA, thus increasing their reactivity as acceptors for peptidyl transferase. The protein is Elongation factor P (efp) of Synechococcus elongatus (strain ATCC 33912 / PCC 7942 / FACHB-805) (Anacystis nidulans R2).